The sequence spans 226 residues: Protein pdh1 (226 aa).

A signal peptide spans methionine 1–glycine 26. The Extracellular segment spans residues isoleucine 27–threonine 41. A helical transmembrane segment spans residues phenylalanine 42–isoleucine 62. The Cytoplasmic portion of the chain corresponds to threonine 63–serine 65. The helical transmembrane segment at phenylalanine 66–valine 86 threads the bilayer. Residues glutamate 87–tyrosine 97 are Extracellular-facing. Residues leucine 98–isoleucine 118 traverse the membrane as a helical segment. The Cytoplasmic segment spans residues alanine 119 to phenylalanine 191. The helical transmembrane segment at cysteine 192 to valine 212 threads the bilayer. Over glutamine 213–isoleucine 226 the chain is Extracellular.

The protein localises to the membrane. The polypeptide is Protein pdh1 (pdh1) (Schizosaccharomyces pombe (strain 972 / ATCC 24843) (Fission yeast)).